The chain runs to 329 residues: UDP-sugar transporter sqv-7 (329 aa).

9 helical membrane passes run 15–34 (SAVF…KILL), 41–63 (SFLF…AKMF), 86–108 (YFFN…FTVL), 129–151 (SKAV…IYDL), 155–174 (ALGY…LGVY), 187–209 (YGLM…QYTG), 224–246 (TSSV…YSLV), 253–275 (SALT…GMFS), and 280–302 (VFQW…YTYV).

It belongs to the TPT transporter family. SLC35D subfamily.

The protein localises to the golgi apparatus membrane. Acts as a transporter of UDP-glucuronic acid (UDP-GlcA), UDP-N-acetylgalactosamine (UDP-GalNAc) and UDP-galactose (UDP-Gal) from the cytoplasm into the Golgi lumen. Involved in the biosynthesis of glycoconjugates that play a pivotal role in development. Involved in the synthesis of chondroitin sulfate and heparan sulfate proteoglycans. Required for embryonic development. Involved in vulva epithelium invagination and embryonic development. Involved in the directed migration of hermaphrodite-specific neurons. In Caenorhabditis elegans, this protein is UDP-sugar transporter sqv-7 (sqv-7).